The sequence spans 405 residues: Arginine biosynthesis bifunctional protein ArgJ (405 aa).

Residues Thr152, Lys178, Thr189, Glu276, Asn400, and Ser405 each contribute to the substrate site. Residue Thr189 is the Nucleophile of the active site.

Belongs to the ArgJ family. Heterotetramer of two alpha and two beta chains.

The protein resides in the cytoplasm. It catalyses the reaction N(2)-acetyl-L-ornithine + L-glutamate = N-acetyl-L-glutamate + L-ornithine. It carries out the reaction L-glutamate + acetyl-CoA = N-acetyl-L-glutamate + CoA + H(+). Its pathway is amino-acid biosynthesis; L-arginine biosynthesis; L-ornithine and N-acetyl-L-glutamate from L-glutamate and N(2)-acetyl-L-ornithine (cyclic): step 1/1. It participates in amino-acid biosynthesis; L-arginine biosynthesis; N(2)-acetyl-L-ornithine from L-glutamate: step 1/4. Its function is as follows. Catalyzes two activities which are involved in the cyclic version of arginine biosynthesis: the synthesis of N-acetylglutamate from glutamate and acetyl-CoA as the acetyl donor, and of ornithine by transacetylation between N(2)-acetylornithine and glutamate. The polypeptide is Arginine biosynthesis bifunctional protein ArgJ (Chromobacterium violaceum (strain ATCC 12472 / DSM 30191 / JCM 1249 / CCUG 213 / NBRC 12614 / NCIMB 9131 / NCTC 9757 / MK)).